The primary structure comprises 423 residues: 5-hydroxytryptamine receptor 1A (423 aa).

Residues 1-38 (MEGLSPRQGNNTTSSEGPFGTLGNATGISDVTFSYQVI) are Extracellular-facing. N-linked (GlcNAc...) asparagine glycans are attached at residues Asn10, Asn11, and Asn24. A helical membrane pass occupies residues 39–59 (TSLLLGTLIFCAVLGNACVVA). The Cytoplasmic portion of the chain corresponds to 60 to 73 (AIALERSLQNVANY). A helical transmembrane segment spans residues 74–98 (LIGSLAVTDLMVSVLVLPMAALYQV). Residues 99-107 (LNKWTLGQV) are Extracellular-facing. Residues 108 to 132 (TCDLFIALDVLCCTSSILHLCAIAL) traverse the membrane as a helical segment. The cysteines at positions 109 and 187 are disulfide-linked. 2 residues coordinate serotonin: Asp116 and Cys120. The DRY motif; important for ligand-induced conformation changes motif lies at 133-135 (DRY). Residues 133–152 (DRYWAITDPIDYVNKRTPRR) are Cytoplasmic-facing. A helical membrane pass occupies residues 153–174 (AAALISLTWLIGFLISIPPMLG). Residues 175–193 (WRTPEDRSDPDACTISKDH) lie on the Extracellular side of the membrane. A helical membrane pass occupies residues 194-216 (GYTIYSTFGAFYIPLLLMLVLYG). Residues 217–346 (RIFRAARFRI…LARERKTVKT (130 aa)) lie on the Cytoplasmic side of the membrane. A disordered region spans residues 235 to 277 (RKGADARSGVSPAPQPRKSVNGEPGGREWRQGPGSQAGGPLCT). 1D-myo-inositol 4-phosphate-binding residues include Lys345, Thr346, and Gly352. The chain crosses the membrane as a helical span at residues 347–370 (LGIIMGTFILCWLPFFIVALVLPF). Over 371–378 (CESSCHMP) the chain is Extracellular. The helical transmembrane segment at 379–403 (TLLGAIINWLGYSNSLLNPVIYAYF) threads the bilayer. The NPxxY motif; important for ligand-induced conformation changes and signaling signature appears at 396-400 (NPVIY). 1D-myo-inositol 4-phosphate contacts are provided by Phe403, Asn404, and Lys405. Residues 404-423 (NKDFQNAFKKIVRCKFCRRR) are Cytoplasmic-facing.

Belongs to the G-protein coupled receptor 1 family. 5-hydroxytryptamine receptor subfamily. HTR1A sub-subfamily. As to quaternary structure, heterodimer; heterodimerizes with GPER1. Interacts with YIF1B. Interacts with GPR39 and GALR1.

It localises to the cell membrane. The protein resides in the cell projection. Its subcellular location is the dendrite. With respect to regulation, G-protein coupled receptor activity is regulated by lipids: phosphatidylinositol 4-phosphate increases HTR1A-mediated activity. Functionally, G-protein coupled receptor for 5-hydroxytryptamine (serotonin). Also functions as a receptor for various drugs and psychoactive substances. Ligand binding causes a conformation change that triggers signaling via guanine nucleotide-binding proteins (G proteins) and modulates the activity of downstream effectors, such as adenylate cyclase. HTR1A is coupled to G(i)/G(o) G alpha proteins and mediates inhibitory neurotransmission: signaling inhibits adenylate cyclase activity and activates a phosphatidylinositol-calcium second messenger system that regulates the release of Ca(2+) ions from intracellular stores. Beta-arrestin family members regulate signaling by mediating both receptor desensitization and resensitization processes. The chain is 5-hydroxytryptamine receptor 1A (HTR1A) from Canis lupus familiaris (Dog).